The following is a 333-amino-acid chain: Fructose-1,6-bisphosphatase class 1 (333 aa).

Mg(2+) is bound by residues Glu92, Asp113, Leu115, and Asp116. Residues 116 to 119, Asn209, Tyr242, and Lys272 contribute to the substrate site; that span reads DGSS. Mg(2+) is bound at residue Glu278.

It belongs to the FBPase class 1 family. As to quaternary structure, homotetramer. The cofactor is Mg(2+).

The protein localises to the cytoplasm. The catalysed reaction is beta-D-fructose 1,6-bisphosphate + H2O = beta-D-fructose 6-phosphate + phosphate. It participates in carbohydrate biosynthesis; Calvin cycle. The chain is Fructose-1,6-bisphosphatase class 1 from Chlorobaculum parvum (strain DSM 263 / NCIMB 8327) (Chlorobium vibrioforme subsp. thiosulfatophilum).